The following is a 684-amino-acid chain: uncharacterized protein (684 aa).

2 disordered regions span residues 267-353 (MGAR…TCTD) and 388-449 (SVAS…AERE). Residues 316–326 (GMTSAKASTSY) show a composition bias toward polar residues. Basic and acidic residues predominate over residues 438–449 (RPTEARRRAERE).

This is an uncharacterized protein from Colorado tick fever virus (strain USA/Florio N-7180) (CTFV).